Here is a 301-residue protein sequence, read N- to C-terminus: Golgi to ER traffic protein 2 (301 aa).

The Cytoplasmic portion of the chain corresponds to 1-167 (MSEPVVDTAE…LEYNTYNQKL (167 aa)). The segment covering 42-55 (SQGSSVKTSGVKSV) has biased composition (low complexity). The tract at residues 42–93 (SQGSSVKTSGVKSVLDQEKEATSSHDDDPEIQDITEITTPPPRTPPIGEDAP) is disordered. Residues 56 to 67 (LDQEKEATSSHD) show a composition bias toward basic and acidic residues. A helical membrane pass occupies residues 168–188 (WKFRFLLVRVLVTLFNFFYHY). At 189 to 214 (TSISDFHASNYAYVRDLSSEEYPVRD) the chain is on the lumenal side. A helical membrane pass occupies residues 215 to 234 (FFTWFATSEVVLVAAYYSVF). The Cytoplasmic portion of the chain corresponds to 235–278 (HSLGLFHAANQNSIILKVMSMGSMILPQLESYKPLVARFLGYYE). A helical transmembrane segment spans residues 279-299 (LLGIVLGGLSLVIVLFGLLSF). Residues 300–301 (AN) are Lumenal-facing.

It belongs to the GET2 family. As to quaternary structure, component of the Golgi to ER traffic (GET) complex, which is composed of GET1, GET2 and GET3. Within the complex, GET1 and GET2 form a heterotetramer which is stabilized by phosphatidylinositol binding and which binds to the GET3 homodimer.

It is found in the endoplasmic reticulum membrane. It localises to the golgi apparatus membrane. In terms of biological role, required for the post-translational delivery of tail-anchored (TA) proteins to the endoplasmic reticulum. Together with GET1, acts as a membrane receptor for soluble GET3, which recognizes and selectively binds the transmembrane domain of TA proteins in the cytosol. The GET complex cooperates with the HDEL receptor ERD2 to mediate the ATP-dependent retrieval of resident ER proteins that contain a C-terminal H-D-E-L retention signal from the Golgi to the ER. The chain is Golgi to ER traffic protein 2 from Candida dubliniensis (strain CD36 / ATCC MYA-646 / CBS 7987 / NCPF 3949 / NRRL Y-17841) (Yeast).